The chain runs to 58 residues: DNA-binding protein (58 aa).

Basic residues-rich tracts occupy residues 1–19 (MVRRRRSRSPYRRRSRSRS) and 28–58 (SRYRSRSRSRSRSRSRARSRSPYHHHINQYI). The disordered stretch occupies residues 1–58 (MVRRRRSRSPYRRRSRSRSRSGSDRSRSRYRSRSRSRSRSRSRARSRSPYHHHINQYI).

In terms of processing, probably phosphorylated in infected cells.

It is found in the virion. Thought to be responsible for DNA condensation during packaging of the nucleocapsids. In Cryptophlebia leucotreta granulosis virus (ClGV), this protein is DNA-binding protein (P7.3).